The following is a 133-amino-acid chain: MLKPKKTKFHKYHRGKIKGKIYDNVNFGEFALQSLEFGWITSKQIEAIRKVITRYSKKGGKLWIRIFPDKPITFRPAETRMGSGKGNVEYWVAVIKPGKIICEISGIPNSISKYCLKIAGYKLPVKTKILYKN.

The protein belongs to the universal ribosomal protein uL16 family. Part of the 50S ribosomal subunit.

It localises to the plastid. The polypeptide is Large ribosomal subunit protein uL16c (Euglena longa (Euglenophycean alga)).